Consider the following 414-residue polypeptide: Inositol-tetrakisphosphate 1-kinase (414 aa).

Position 18 (Lys18) interacts with 1D-myo-inositol 1,3,4-trisphosphate. Arg106 and Lys157 together coordinate ATP. Residues 117-325 enclose the ATP-grasp domain; that stretch reads EAYMEDDRIC…IATVLQGQST (209 aa). His167 and Lys199 together coordinate 1D-myo-inositol 1,3,4-trisphosphate. Residues 188–199, Ser214, Ser232, and Ser236 each bind ATP; that span reads QNFINHNAVLYK. Mg(2+) contacts are provided by Asp281, Asp295, and Asn297. A 1D-myo-inositol 1,3,4-trisphosphate-binding site is contributed by Asn297. Lys340 and Lys383 each carry N6-acetyllysine; by EP300 and CREBBP. Position 396 is a phosphoserine (Ser396). Lys410 is modified (N6-acetyllysine; by EP300 and CREBBP).

The protein belongs to the ITPK1 family. In terms of assembly, monomer. Interacts with GPS1/COPS1. Requires Mg(2+) as cofactor. Acetylation by EP300 and CREBBP destabilizes ITPK1, and down-regulates enzymatic activity. Deacetylated by SIRT1. Expressed in brain &gt; heart &gt; skeletal muscle = kidney = pancreas = liver = placenta &gt; lung. In brain, it is expressed in cerebellum, cerebral cortex, medulla, spinal cord, occipital lobe, frontal lobe, temporal lobe and putamen.

It catalyses the reaction 1D-myo-inositol 3,4,5,6-tetrakisphosphate + ATP = 1D-myo-inositol 1,3,4,5,6-pentakisphosphate + ADP + H(+). It carries out the reaction 1D-myo-inositol 1,3,4-trisphosphate + ATP = 1D-myo-inositol 1,3,4,5-tetrakisphosphate + ADP + H(+). The enzyme catalyses 1D-myo-inositol 1,3,4-trisphosphate + ATP = 1D-myo-inositol 1,3,4,6-tetrakisphosphate + ADP + H(+). The catalysed reaction is 1D-myo-inositol 3,4,6-trisphosphate + ATP = 1D-myo-inositol 1,3,4,6-tetrakisphosphate + ADP + H(+). It catalyses the reaction 1D-myo-inositol 1,3,4-trisphosphate + 1D-myo-inositol 1,3,4,5,6-pentakisphosphate = 1D-myo-inositol 3,4,5,6-tetrakisphosphate + 1D-myo-inositol 1,3,4,6-tetrakisphosphate. It carries out the reaction 1D-myo-inositol 1,3,4-trisphosphate + 1D-myo-inositol 1,3,4,5,6-pentakisphosphate = 1D-myo-inositol 3,4,5,6-tetrakisphosphate + 1D-myo-inositol 1,3,4,5-tetrakisphosphate. In terms of biological role, kinase that can phosphorylate various inositol polyphosphate such as Ins(3,4,5,6)P4 or Ins(1,3,4)P3. Phosphorylates Ins(3,4,5,6)P4 at position 1 to form Ins(1,3,4,5,6)P5. This reaction is thought to have regulatory importance, since Ins(3,4,5,6)P4 is an inhibitor of plasma membrane Ca(2+)-activated Cl(-) channels, while Ins(1,3,4,5,6)P5 is not. Also phosphorylates Ins(1,3,4)P3 on O-5 and O-6 to form Ins(1,3,4,6)P4, an essential molecule in the hexakisphosphate (InsP6) pathway. Also acts as an inositol polyphosphate phosphatase that dephosphorylates Ins(1,3,4,5)P4 and Ins(1,3,4,6)P4 to Ins(1,3,4)P3, and Ins(1,3,4,5,6)P5 to Ins(3,4,5,6)P4. May also act as an isomerase that interconverts the inositol tetrakisphosphate isomers Ins(1,3,4,5)P4 and Ins(1,3,4,6)P4 in the presence of ADP and magnesium. Probably acts as the rate-limiting enzyme of the InsP6 pathway. Modifies TNF-alpha-induced apoptosis by interfering with the activation of TNFRSF1A-associated death domain. Plays an important role in MLKL-mediated necroptosis. Produces highly phosphorylated inositol phosphates such as inositolhexakisphosphate (InsP6) which bind to MLKL mediating the release of an N-terminal auto-inhibitory region leading to its activation. Essential for activated phospho-MLKL to oligomerize and localize to the cell membrane during necroptosis. This Homo sapiens (Human) protein is Inositol-tetrakisphosphate 1-kinase.